Consider the following 269-residue polypeptide: Short-chain dehydrogenase/reductase ABA4 (269 aa).

Positions 34, 80, 144, 174, 178, 207, and 209 each coordinate NADP(+). Tyr-174 (proton donor) is an active-site residue. Catalysis depends on Lys-178, which acts as the Lowers pKa of active site Tyr.

This sequence belongs to the short-chain dehydrogenases/reductases (SDR) family.

It functions in the pathway hormone biosynthesis. Functionally, short-chain dehydrogenase/reductase involved in the biosynthesis of abscisic acid (ABA), a phytohormone that acts antagonistically toward salicylic acid (SA), jasmonic acid (JA) and ethylene (ETH) signaling, to impede plant defense responses. During pathogen-host interaction, ABA plays a dual role in disease severity by increasing plant susceptibility and accelerating pathogenesis in the fungus itself. The first step of the pathway catalyzes the reaction from farnesyl diphosphate to alpha-ionylideneethane performed by the alpha-ionylideneethane synthase ABA3 via a three-step reaction mechanism involving 2 neutral intermediates, beta-farnesene and allofarnesene. The cytochrome P450 monooxygenase ABA1 might then be involved in the conversion of alpha-ionylideneethane to alpha-ionylideneacetic acid. Alpha-ionylideneacetic acid is further converted to abscisic acid in 2 steps involving the cytochrome P450 monooxygenase ABA2 and the short-chain dehydrogenase/reductase ABA4, via the intermediates 1'-deoxy-ABA or 1',4'-trans-diol-ABA, depending on the order of action of these 2 enzymes. ABA2 is responsible for the hydroxylation of carbon atom C-1' and ABA4 might be involved in the oxidation of the C-4' carbon atom. In Pyricularia oryzae (strain Y34) (Rice blast fungus), this protein is Short-chain dehydrogenase/reductase ABA4 (ABA4).